A 110-amino-acid chain; its full sequence is Ribonuclease H2 subunit C (110 aa).

A disordered region spans residues 45–69 (LKREKSATPSSSDNTTSNTFSNGAI). Residues 51 to 66 (ATPSSSDNTTSNTFSN) are compositionally biased toward low complexity.

The protein belongs to the RNase H2 subunit C family. Highly divergent. As to quaternary structure, the RNase 2 complex is a heterotrimer composed of the catalytic subunit RNH201 and of the non-catalytic subunits RNH202 and RNH203.

It localises to the cytoplasm. The protein resides in the nucleus. Functionally, non catalytic subunit of RNase H2, an endonuclease that specifically degrades the RNA of RNA:DNA hybrids. Participates in DNA replication, possibly by mediating the removal of lagging-strand Okazaki fragment RNA primers during DNA replication. Mediates the excision of single ribonucleotides from DNA:RNA duplexes. In Saccharomyces cerevisiae (strain ATCC 204508 / S288c) (Baker's yeast), this protein is Ribonuclease H2 subunit C (RNH203).